The chain runs to 392 residues: Formate-dependent phosphoribosylglycinamide formyltransferase (392 aa).

N(1)-(5-phospho-beta-D-ribosyl)glycinamide-binding positions include 15–16 (EL) and glutamate 75. Residues arginine 107, lysine 148, 153-158 (SSGKGQ), 188-191 (EEFL), and glutamate 196 each bind ATP. One can recognise an ATP-grasp domain in the interval 112–302 (DLASGELGLH…EFELHLRAVL (191 aa)). Residues glutamate 261 and glutamate 273 each coordinate Mg(2+). N(1)-(5-phospho-beta-D-ribosyl)glycinamide-binding positions include aspartate 280, lysine 350, and 357–358 (RR).

It belongs to the PurK/PurT family. As to quaternary structure, homodimer.

The catalysed reaction is N(1)-(5-phospho-beta-D-ribosyl)glycinamide + formate + ATP = N(2)-formyl-N(1)-(5-phospho-beta-D-ribosyl)glycinamide + ADP + phosphate + H(+). It functions in the pathway purine metabolism; IMP biosynthesis via de novo pathway; N(2)-formyl-N(1)-(5-phospho-D-ribosyl)glycinamide from N(1)-(5-phospho-D-ribosyl)glycinamide (formate route): step 1/1. Functionally, involved in the de novo purine biosynthesis. Catalyzes the transfer of formate to 5-phospho-ribosyl-glycinamide (GAR), producing 5-phospho-ribosyl-N-formylglycinamide (FGAR). Formate is provided by PurU via hydrolysis of 10-formyl-tetrahydrofolate. This chain is Formate-dependent phosphoribosylglycinamide formyltransferase, found in Synechococcus sp. (strain CC9902).